We begin with the raw amino-acid sequence, 200 residues long: ATP-dependent Clp protease proteolytic subunit 3 (200 aa).

The active-site Nucleophile is serine 101. Histidine 126 is an active-site residue.

Belongs to the peptidase S14 family. As to quaternary structure, fourteen ClpP subunits assemble into 2 heptameric rings which stack back to back to give a disk-like structure with a central cavity, resembling the structure of eukaryotic proteasomes.

The protein localises to the cytoplasm. It carries out the reaction Hydrolysis of proteins to small peptides in the presence of ATP and magnesium. alpha-casein is the usual test substrate. In the absence of ATP, only oligopeptides shorter than five residues are hydrolyzed (such as succinyl-Leu-Tyr-|-NHMec, and Leu-Tyr-Leu-|-Tyr-Trp, in which cleavage of the -Tyr-|-Leu- and -Tyr-|-Trp bonds also occurs).. Cleaves peptides in various proteins in a process that requires ATP hydrolysis. Has a chymotrypsin-like activity. Plays a major role in the degradation of misfolded proteins. In Synechococcus sp. (strain CC9605), this protein is ATP-dependent Clp protease proteolytic subunit 3.